A 327-amino-acid polypeptide reads, in one-letter code: Aldo-keto reductase family 1 member A1 (327 aa).

Residues 13 to 22, threonine 23, tryptophan 24, and aspartate 47 each bind NADP(+); that span reads GQKIPLIGLG. Tyrosine 52 (proton donor) is an active-site residue. Serine 164, asparagine 165, serine 213, leucine 215, serine 217, lysine 265, serine 266, valine 267, threonine 268, arginine 271, glutamine 274, and asparagine 275 together coordinate NADP(+).

It belongs to the aldo/keto reductase family.

The protein resides in the cytoplasm. It localises to the cytosol. Its subcellular location is the apical cell membrane. The enzyme catalyses a primary alcohol + NADP(+) = an aldehyde + NADPH + H(+). The catalysed reaction is S-nitroso-CoA + NADPH + H(+) = sulfinamide-CoA + NADP(+). It catalyses the reaction S-nitrosoglutathione + NADPH + H(+) = S-(hydroxysulfenamide)glutathione + NADP(+). In terms of biological role, catalyzes the NADPH-dependent reduction of a wide variety of carbonyl-containing compounds to their corresponding alcohols. Displays enzymatic activity towards endogenous metabolites such as aromatic and aliphatic aldehydes, ketones, monosaccharides and bile acids. Acts as an aldehyde-detoxification enzyme. Also acts as an inhibitor of protein S-nitrosylation by mediating degradation of S-nitroso-coenzyme A (S-nitroso-CoA), a cofactor required to S-nitrosylate proteins. Also acts as a S-nitroso-glutathione reductase by catalyzing the NADPH-dependent reduction of S-nitrosoglutathione. Displays no reductase activity towards retinoids. The sequence is that of Aldo-keto reductase family 1 member A1 (akr1a1) from Xenopus tropicalis (Western clawed frog).